Consider the following 292-residue polypeptide: NAD kinase (292 aa).

The Proton acceptor role is filled by Asp-64. Residues Asp-64–Gly-65, Asn-138–Asp-139, Arg-149, Arg-166, Asp-168, Thr-179–Ser-184, and Gln-238 each bind NAD(+).

It belongs to the NAD kinase family. The cofactor is a divalent metal cation.

It localises to the cytoplasm. The enzyme catalyses NAD(+) + ATP = ADP + NADP(+) + H(+). In terms of biological role, involved in the regulation of the intracellular balance of NAD and NADP, and is a key enzyme in the biosynthesis of NADP. Catalyzes specifically the phosphorylation on 2'-hydroxyl of the adenosine moiety of NAD to yield NADP. The chain is NAD kinase from Oleidesulfovibrio alaskensis (strain ATCC BAA-1058 / DSM 17464 / G20) (Desulfovibrio alaskensis).